Here is a 165-residue protein sequence, read N- to C-terminus: 3-isopropylmalate dehydratase small subunit (165 aa).

Belongs to the LeuD family. LeuD type 2 subfamily. As to quaternary structure, heterodimer of LeuC and LeuD.

It carries out the reaction (2R,3S)-3-isopropylmalate = (2S)-2-isopropylmalate. Its pathway is amino-acid biosynthesis; L-leucine biosynthesis; L-leucine from 3-methyl-2-oxobutanoate: step 2/4. Functionally, catalyzes the isomerization between 2-isopropylmalate and 3-isopropylmalate, via the formation of 2-isopropylmaleate. The polypeptide is 3-isopropylmalate dehydratase small subunit (Hydrogenobaculum sp. (strain Y04AAS1)).